Reading from the N-terminus, the 99-residue chain is Acylphosphatase-1 (99 aa).

N-acetylalanine is present on Ala2. Positions 9–99 (SVDYEVSGRV…LEHTDFQIRK (91 aa)) constitute an Acylphosphatase-like domain. Catalysis depends on residues Arg24 and Asn42.

Belongs to the acylphosphatase family. Organ-common type isozyme is found in many different tissues.

It catalyses the reaction an acyl phosphate + H2O = a carboxylate + phosphate + H(+). The chain is Acylphosphatase-1 (ACYP1) from Gallus gallus (Chicken).